We begin with the raw amino-acid sequence, 159 residues long: ATP synthase subunit delta, mitochondrial (159 aa).

The transit peptide at 1–23 directs the protein to the mitochondrion; it reads MFRLSAARTLAKSVNTVVAKRTY.

The protein belongs to the ATPase epsilon chain family. F-type ATPases have 2 components, CF(1) - the catalytic core - and CF(0) - the membrane proton channel. CF(1) has five subunits: alpha(3), beta(3), gamma(1), delta(1), epsilon(1). CF(0) has three main subunits: a, b and c.

The protein resides in the mitochondrion. The protein localises to the mitochondrion inner membrane. Mitochondrial membrane ATP synthase (F(1)F(0) ATP synthase or Complex V) produces ATP from ADP in the presence of a proton gradient across the membrane which is generated by electron transport complexes of the respiratory chain. F-type ATPases consist of two structural domains, F(1) - containing the extramembraneous catalytic core, and F(0) - containing the membrane proton channel, linked together by a central stalk and a peripheral stalk. During catalysis, ATP turnover in the catalytic domain of F(1) is coupled via a rotary mechanism of the central stalk subunits to proton translocation. Part of the complex F(1) domain and of the central stalk which is part of the complex rotary element. Rotation of the central stalk against the surrounding alpha(3)beta(3) subunits leads to hydrolysis of ATP in three separate catalytic sites on the beta subunits. The protein is ATP synthase subunit delta, mitochondrial (ATP16) of Kluyveromyces lactis (strain ATCC 8585 / CBS 2359 / DSM 70799 / NBRC 1267 / NRRL Y-1140 / WM37) (Yeast).